The sequence spans 205 residues: GTP cyclohydrolase 1 (205 aa).

3 residues coordinate Zn(2+): C94, H97, and C165.

The protein belongs to the GTP cyclohydrolase I family. Toroid-shaped homodecamer, composed of two pentamers of five dimers.

It catalyses the reaction GTP + H2O = 7,8-dihydroneopterin 3'-triphosphate + formate + H(+). It participates in cofactor biosynthesis; 7,8-dihydroneopterin triphosphate biosynthesis; 7,8-dihydroneopterin triphosphate from GTP: step 1/1. This chain is GTP cyclohydrolase 1, found in Sinorhizobium medicae (strain WSM419) (Ensifer medicae).